The following is a 771-amino-acid chain: DNA polymerase 1 (771 aa).

The protein belongs to the DNA polymerase type-B family.

The catalysed reaction is DNA(n) + a 2'-deoxyribonucleoside 5'-triphosphate = DNA(n+1) + diphosphate. The sequence is that of DNA polymerase 1 (polI) from Pyrococcus abyssi (strain GE5 / Orsay).